The following is a 302-amino-acid chain: Dihydroorotate dehydrogenase B (NAD(+)), catalytic subunit (302 aa).

FMN contacts are provided by residues Ser-23 and 47-48 (KS). Substrate contacts are provided by residues Lys-47, 71-75 (NAMGL), and Asn-125. Position 125 (Asn-125) interacts with FMN. Cys-128 acts as the Nucleophile in catalysis. Lys-163 and Ile-189 together coordinate FMN. Residue 190-191 (NT) coordinates substrate. Residues Gly-215, 241–242 (GG), and 263–264 (GT) each bind FMN.

Belongs to the dihydroorotate dehydrogenase family. Type 1 subfamily. Heterotetramer of 2 PyrK and 2 PyrD type B subunits. It depends on FMN as a cofactor.

Its subcellular location is the cytoplasm. The enzyme catalyses (S)-dihydroorotate + NAD(+) = orotate + NADH + H(+). It functions in the pathway pyrimidine metabolism; UMP biosynthesis via de novo pathway; orotate from (S)-dihydroorotate (NAD(+) route): step 1/1. Catalyzes the conversion of dihydroorotate to orotate with NAD(+) as electron acceptor. The sequence is that of Dihydroorotate dehydrogenase B (NAD(+)), catalytic subunit (pyrD) from Thermococcus kodakarensis (strain ATCC BAA-918 / JCM 12380 / KOD1) (Pyrococcus kodakaraensis (strain KOD1)).